Consider the following 83-residue polypeptide: Small ribosomal subunit protein uS17 (83 aa).

This sequence belongs to the universal ribosomal protein uS17 family. In terms of assembly, part of the 30S ribosomal subunit.

Its function is as follows. One of the primary rRNA binding proteins, it binds specifically to the 5'-end of 16S ribosomal RNA. This is Small ribosomal subunit protein uS17 from Francisella philomiragia subsp. philomiragia (strain ATCC 25017 / CCUG 19701 / FSC 153 / O#319-036).